The following is a 215-amino-acid chain: Proteasome subunit beta inpE (215 aa).

The protein belongs to the peptidase T1B family.

The protein localises to the cytoplasm. The protein resides in the nucleus. The enzyme catalyses Cleavage of peptide bonds with very broad specificity.. Functionally, proteasome subunit beta type-6; part of the inp gene cluster that mediates the biosynthesis of fellutamide B, a mycotoxin that acts as a proteasome inhibitor. In the first step of fellutabmide B biosynthesis inpC activates 3-hydroxydodecanoic acid to generate 3-hydroxydodecanoyl-AMP that is then loaded onto the T0 domain of inpB. The 3-hydroxydodecanoyl-S-phosphopantetheinyl-T0 is sequentially extended with L-Asn and L-Gln by the two CAT modules of inpB. The linear lipodipeptide from inpB is then transferred onto inpA for the addition of the third amino acid, L-Leu. Reductive releasing of the lipotripeptide by the TE domain of inpA produces (2S)-fellutamide B. InpF might be involved in the release and transfer of the lipodipeptide from inpB to inpA. The inp cluster-encoded proteasome subunit inpE confers resistance to internally produced fellutamides. The MFS efflux transporter inpD may contribute to fellutamide resistance as well. The protein is Proteasome subunit beta inpE (inpE) of Emericella nidulans (strain FGSC A4 / ATCC 38163 / CBS 112.46 / NRRL 194 / M139) (Aspergillus nidulans).